The primary structure comprises 292 residues: Putative rRNA 2'-O-methyltransferase fibrillarin 3 (292 aa).

The interval 1–58 (MKPPQRGRGGGVRGGRGLARGGEGSAVRGSGRGGESGRGRGPGRVKSESDGGIKGGSK) is disordered. Residues 7-42 (GRGGGVRGGRGLARGGEGSAVRGSGRGGESGRGRGP) show a composition bias toward gly residues. Residues 146–147 (YT), 165–166 (EH), 190–191 (DA), and 210–213 (DVNH) contribute to the S-adenosyl-L-methionine site.

It belongs to the methyltransferase superfamily. Fibrillarin family. Component of box C/D small nucleolar ribonucleoprotein (snoRNP) particles. In terms of tissue distribution, not detectable by RT-PCR.

It localises to the nucleus. Its subcellular location is the nucleolus. The enzyme catalyses L-glutaminyl-[histone H2A] + S-adenosyl-L-methionine = N(5)-methyl-L-glutaminyl-[histone H2A] + S-adenosyl-L-homocysteine + H(+). Its function is as follows. S-adenosyl-L-methionine-dependent methyltransferase that has the ability to methylate both RNAs and proteins. Involved in pre-rRNA processing. Utilizes the methyl donor S-adenosyl-L-methionine to catalyze the site-specific 2'-hydroxyl methylation of ribose moieties in pre-ribosomal RNA. Site specificity is provided by a guide RNA that base pairs with the substrate. Methylation occurs at a characteristic distance from the sequence involved in base pairing with the guide RNA. Also acts as a protein methyltransferase by mediating methylation of 'Gln-105' of histone H2A (H2AQ105me), a modification that impairs binding of the FACT complex and is specifically present at 35S ribosomal DNA locus. The polypeptide is Putative rRNA 2'-O-methyltransferase fibrillarin 3 (FIB3) (Arabidopsis thaliana (Mouse-ear cress)).